The sequence spans 303 residues: Ornithine carbamoyltransferase (303 aa).

Carbamoyl phosphate contacts are provided by residues 53 to 56 (STRT), glutamine 80, arginine 104, and 131 to 134 (HPCQ). Residues asparagine 162, aspartate 222, and 226–227 (SM) contribute to the L-ornithine site. Carbamoyl phosphate-binding positions include 261 to 262 (CL) and arginine 289.

This sequence belongs to the aspartate/ornithine carbamoyltransferase superfamily. OTCase family.

The protein localises to the cytoplasm. It carries out the reaction carbamoyl phosphate + L-ornithine = L-citrulline + phosphate + H(+). The protein operates within amino-acid biosynthesis; L-arginine biosynthesis; L-arginine from L-ornithine and carbamoyl phosphate: step 1/3. Its function is as follows. Reversibly catalyzes the transfer of the carbamoyl group from carbamoyl phosphate (CP) to the N(epsilon) atom of ornithine (ORN) to produce L-citrulline. The polypeptide is Ornithine carbamoyltransferase (Mesorhizobium japonicum (strain LMG 29417 / CECT 9101 / MAFF 303099) (Mesorhizobium loti (strain MAFF 303099))).